A 174-amino-acid polypeptide reads, in one-letter code: UPF0398 protein LACR_0544 (174 aa).

The protein belongs to the UPF0398 family.

This Lactococcus lactis subsp. cremoris (strain SK11) protein is UPF0398 protein LACR_0544.